The sequence spans 984 residues: Ephrin type-B receptor 1 (984 aa).

A signal peptide spans 1–17 (MALDCLLLFLLASAVAA). Residues 18-540 (MEETLMDTRT…YKSELREQLP (523 aa)) are Extracellular-facing. Positions 19-201 (EETLMDTRTA…FFKKCPSIVQ (183 aa)) constitute an Eph LBD domain. 2 consecutive Fibronectin type-III domains span residues 322–432 (VPSG…TNQA) and 433–528 (APST…TLTD). 3 N-linked (GlcNAc...) asparagine glycosylation sites follow: asparagine 334, asparagine 426, and asparagine 480. A helical membrane pass occupies residues 541–563 (LIAGSAAAGVVFVVSLVAISIVC). The Cytoplasmic segment spans residues 564–984 (SRKRAYSKEA…QMNQSPSVMA (421 aa)). Phosphotyrosine is present on tyrosine 600. Positions 619-882 (VKIEEVIGAG…EIVNTLDKMI (264 aa)) constitute a Protein kinase domain. Residues 625–633 (IGAGEFGEV) and lysine 651 each bind ATP. Aspartate 744 (proton acceptor) is an active-site residue. The region spanning 911 to 975 (TAFTTVDDWL…LSSIHSMRVQ (65 aa)) is the SAM domain. Phosphotyrosine; by autocatalysis is present on tyrosine 928. The short motif at 982-984 (VMA) is the PDZ-binding element.

It belongs to the protein kinase superfamily. Tyr protein kinase family. Ephrin receptor subfamily. In terms of assembly, heterotetramer upon binding of the ligand. The heterotetramer is composed of an ephrin dimer and a receptor dimer. Oligomerization is probably required to induce biological responses. Interacts with EPHB6; transphosphorylates EPHB6 to form an active signaling complex. Interacts with PICK1. Interacts (through Tyr-594) with NCK1 (via SH2 domain); activates the JUN cascade to regulate cell adhesion. The ligand-activated form interacts (through Tyr-928) with GRB7 and GRB10 (via SH2 domains). The ligand-activated form interacts (residues within the catalytic domain) with GRB2 (via SH2 domain). Interacts with GRB2, SHC1 and SRC; activates the MAPK/ERK cascade to regulate cell migration. Interacts with CBL; regulates receptor degradation through ubiquitination. Interacts with ACP1. Post-translationally, phosphorylated. Autophosphorylation is stimulated by the ligand EFNB1. Required for interaction with SH2 domain-containing interactors, for activation of the MAPK/ERK and JUN signaling cascades and for ubiquitination by CBL. Ubiquitinated; (EFNB1)ligand-induced poly- and/or multi-ubiquitination by CBL is regulated by SRC and leads to lysosomal degradation. In terms of tissue distribution, expressed in neural stem and progenitor cells in the dentate gyrus. Expressed in myogenic progenitor cells.

The protein resides in the cell membrane. It is found in the early endosome membrane. It localises to the cell projection. Its subcellular location is the dendrite. It carries out the reaction L-tyrosyl-[protein] + ATP = O-phospho-L-tyrosyl-[protein] + ADP + H(+). Receptor tyrosine kinase which binds promiscuously transmembrane ephrin-B family ligands residing on adjacent cells, leading to contact-dependent bidirectional signaling into neighboring cells. The signaling pathway downstream of the receptor is referred to as forward signaling while the signaling pathway downstream of the ephrin ligand is referred to as reverse signaling. Cognate/functional ephrin ligands for this receptor include EFNB1, EFNB2 and EFNB3. During nervous system development, regulates retinal axon guidance redirecting ipsilaterally ventrotemporal retinal ganglion cells axons at the optic chiasm midline. This probably requires repulsive interaction with EFNB2. In the adult nervous system together with EFNB3, regulates chemotaxis, proliferation and polarity of the hippocampus neural progenitors. In addition to its role in axon guidance also plays an important redundant role with other ephrin-B receptors in development and maturation of dendritic spines and synapse formation. May also regulate angiogenesis. More generally, may play a role in targeted cell migration and adhesion. Upon activation by EFNB1 and probably other ephrin-B ligands activates the MAPK/ERK and the JNK signaling cascades to regulate cell migration and adhesion respectively. Involved in the maintenance of the pool of satellite cells (muscle stem cells) by promoting their self-renewal and reducing their activation and differentiation. The polypeptide is Ephrin type-B receptor 1 (Ephb1) (Mus musculus (Mouse)).